A 513-amino-acid chain; its full sequence is ATP synthase subunit alpha (513 aa).

169 to 176 (GDRQTGKT) contributes to the ATP binding site.

This sequence belongs to the ATPase alpha/beta chains family. In terms of assembly, F-type ATPases have 2 components, CF(1) - the catalytic core - and CF(0) - the membrane proton channel. CF(1) has five subunits: alpha(3), beta(3), gamma(1), delta(1), epsilon(1). CF(0) has three main subunits: a(1), b(2) and c(9-12). The alpha and beta chains form an alternating ring which encloses part of the gamma chain. CF(1) is attached to CF(0) by a central stalk formed by the gamma and epsilon chains, while a peripheral stalk is formed by the delta and b chains.

The protein localises to the cell inner membrane. It catalyses the reaction ATP + H2O + 4 H(+)(in) = ADP + phosphate + 5 H(+)(out). Its function is as follows. Produces ATP from ADP in the presence of a proton gradient across the membrane. The alpha chain is a regulatory subunit. The sequence is that of ATP synthase subunit alpha from Edwardsiella ictaluri (strain 93-146).